We begin with the raw amino-acid sequence, 206 residues long: Large ribosomal subunit protein uL3 (206 aa).

This sequence belongs to the universal ribosomal protein uL3 family. As to quaternary structure, part of the 50S ribosomal subunit. Forms a cluster with proteins L14 and L19.

In terms of biological role, one of the primary rRNA binding proteins, it binds directly near the 3'-end of the 23S rRNA, where it nucleates assembly of the 50S subunit. The sequence is that of Large ribosomal subunit protein uL3 from Cytophaga hutchinsonii (strain ATCC 33406 / DSM 1761 / CIP 103989 / NBRC 15051 / NCIMB 9469 / D465).